The sequence spans 801 residues: Transferrin receptor protein 2 (801 aa).

Over 1–83 (MERLWGLFQR…WAAAGRRAAP (83 aa)) the chain is Cytoplasmic. A disordered region spans residues 16–45 (PRSSQTVYQRVEGPRKGHLEEEEEDGEEGA). Positions 23–26 (YQRV) match the Endocytosis signal motif. Acidic residues predominate over residues 35-45 (EEEEEDGEEGA). The chain crosses the membrane as a helical; Signal-anchor for type II membrane protein span at residues 84 to 104 (YLVLTALLIFTGAFLLGYVAF). Over 105-801 (RGSCQACGDS…GDVWNIDNNF (697 aa)) the chain is Extracellular. Residues Asn-240, Asn-339, Asn-540, and Asn-754 are each glycosylated (N-linked (GlcNAc...) asparagine).

It belongs to the peptidase M28 family. M28B subfamily. In terms of assembly, homodimer. As to expression, predominantly expressed in liver. While the alpha form is also expressed in spleen, lung, muscle, prostate and peripheral blood mononuclear cells, the beta form is expressed in all tissues tested, albeit weakly.

It is found in the cell membrane. The protein localises to the cytoplasm. Mediates cellular uptake of transferrin-bound iron in a non-iron dependent manner. May be involved in iron metabolism, hepatocyte function and erythrocyte differentiation. In Homo sapiens (Human), this protein is Transferrin receptor protein 2 (TFR2).